The sequence spans 766 residues: Serine/threonine-protein kinase tousled-like 1 (766 aa).

N-acetylmethionine is present on Met-1. The segment covering 1–19 has biased composition (polar residues); it reads MSVQSSSGSLEGPPSWSQL. A disordered region spans residues 1–197; sequence MSVQSSSGSL…SPSPTALAFG (197 aa). The segment covering 20-33 has biased composition (low complexity); that stretch reads STSPTPGSAAAARS. At Thr-38 the chain carries Phosphothreonine. Over residues 43–64 the composition is skewed to basic and acidic residues; the sequence is RPREGAMDELHSLDPRRQELLE. Ser-54, Ser-77, and Ser-80 each carry phosphoserine. Residues 68-85 are compositionally biased toward low complexity; that stretch reads TGVASGSTGSTGSCSVGA. Residues 87 to 103 are compositionally biased toward polar residues; it reads ASTNNESSNHSFGSLGS. Positions 105 to 121 are enriched in basic and acidic residues; it reads SDKESETPEKKQSESSR. Residues Ser-134, Ser-159, Ser-174, and Ser-176 each carry the phosphoserine modification. Over residues 170 to 192 the composition is skewed to low complexity; sequence SPQNSHSHSTPSSSVRPNSPSPT. Residues 230–281 adopt a coiled-coil conformation; the sequence is QDLEKKEGRIDDLLRANCDLRRQIDEQQKLLEKYKERLNKCISMSKKLLIEK. A disordered region spans residues 346 to 383; sequence LAKRKPPTANNSQAPSTNSEPKQRKNKAVNGAENDPFV. Residues 353–365 show a composition bias toward polar residues; sequence TANNSQAPSTNSE. A coiled-coil region spans residues 397–445; it reads HEQEEIFKLRLGHLKKEEAEIQAELERLERVRNLHIRELKRINNEDNSQ. One can recognise a Protein kinase domain in the interval 456–734; it reads YLLLHLLGRG…VHQLANDPYL (279 aa). ATP is bound by residues 462–470 and Lys-485; that span reads LGRGGFSEV. Asp-586 functions as the Proton acceptor in the catalytic mechanism. The residue at position 743 (Ser-743) is a Phosphoserine.

It belongs to the protein kinase superfamily. Ser/Thr protein kinase family. As to quaternary structure, heterodimer with TLK2. It depends on Mg(2+) as a cofactor. As to expression, widely expressed. Present in fetal placenta, liver, kidney and pancreas but not heart or skeletal muscle. Also found in adult cell lines. Isoform 3 is ubiquitously expressed in all tissues examined.

The protein resides in the nucleus. The catalysed reaction is L-seryl-[protein] + ATP = O-phospho-L-seryl-[protein] + ADP + H(+). It carries out the reaction L-threonyl-[protein] + ATP = O-phospho-L-threonyl-[protein] + ADP + H(+). Cell-cycle regulated, maximal activity in S-phase. Inactivated by phosphorylation at Ser-743, potentially by CHEK1. In terms of biological role, rapidly and transiently inhibited by phosphorylation following the generation of DNA double-stranded breaks during S-phase. This is cell cycle checkpoint and ATM-pathway dependent and appears to regulate processes involved in chromatin assembly. Isoform 3 phosphorylates and enhances the stability of the t-SNARE SNAP23, augmenting its assembly with syntaxin. Isoform 3 protects the cells from the ionizing radiation by facilitating the repair of DSBs. In vitro, phosphorylates histone H3 at 'Ser-10'. This is Serine/threonine-protein kinase tousled-like 1 (TLK1) from Homo sapiens (Human).